The following is a 267-amino-acid chain: Malonyl-[acyl-carrier protein] O-methyltransferase (267 aa).

It belongs to the methyltransferase superfamily.

It carries out the reaction malonyl-[ACP] + S-adenosyl-L-methionine = malonyl-[ACP] methyl ester + S-adenosyl-L-homocysteine. Its pathway is cofactor biosynthesis; biotin biosynthesis. Converts the free carboxyl group of a malonyl-thioester to its methyl ester by transfer of a methyl group from S-adenosyl-L-methionine (SAM). It allows to synthesize pimeloyl-ACP via the fatty acid synthetic pathway. This is Malonyl-[acyl-carrier protein] O-methyltransferase from Geobacter sulfurreducens (strain ATCC 51573 / DSM 12127 / PCA).